The primary structure comprises 341 residues: Formimidoylglutamase (341 aa).

Mn(2+) contacts are provided by H133, D162, H164, D166, C253, and D255.

This sequence belongs to the arginase family. Mn(2+) is required as a cofactor.

The catalysed reaction is N-formimidoyl-L-glutamate + H2O = formamide + L-glutamate. Its pathway is amino-acid degradation; L-histidine degradation into L-glutamate; L-glutamate from N-formimidoyl-L-glutamate (hydrolase route): step 1/1. Catalyzes the conversion of N-formimidoyl-L-glutamate to L-glutamate and formamide. The chain is Formimidoylglutamase from Aromatoleum aromaticum (strain DSM 19018 / LMG 30748 / EbN1) (Azoarcus sp. (strain EbN1)).